Reading from the N-terminus, the 392-residue chain is uncharacterized protein (392 aa).

One can recognise a J domain in the interval Thr7–Glu76. The residue at position 108 (Ser108) is a Phosphoserine.

This is an uncharacterized protein from Schizosaccharomyces pombe (strain 972 / ATCC 24843) (Fission yeast).